The sequence spans 438 residues: Probable inactive protein kinase 38 (438 aa).

Positions 77–340 (PRFRLALGKG…FTELQPQYFL (264 aa)) constitute a Protein kinase domain.

It belongs to the protein kinase superfamily. Tyr protein kinase family.

This Equus caballus (Horse) protein is Probable inactive protein kinase 38 (36).